We begin with the raw amino-acid sequence, 897 residues long: MFGAIIKKIVGSKNERELKRMWPVVEKINGLESQVAGLTDDQLREKTFEFKERIARGESLESLLPEAFAVCREGGKRALGMRHFDVQLIGGMVLHQGKIAEMKTGEGKTLVATLPAYLNALTGRGVHVVTVNDYLARRDSEWMGRLYRFLGLTVGVIVHGIDDDERRAAYAADITYGTNNEFGFDYLRDNMKFALEDYVQRPFFFSIVDEVDSILIDEARTPLIISGPTEDSTDKYYIIDRIIPHLKKGEVKEVEANTLSGKRKVYTGDFTVDEKARSSSLTEEGVAKVEKLLKIDNLYDPRHMEILHHVNQALRAHALFRRDVDYVVKDGEVIIVDEFTGRLMPGRRWSDGLHQAIEAKEGVEIENENQTLATITFQNYFRMYEKLSGMTGTADTEAEEFHKIYKLEVTVIPTNRPLLRPDFPDVIYKTEREKFNAVIEEIKGCHEKGQPTLVGTISIEKSEVLAEILRKQGIPHNVLNAKQHEREAEIVAQAGRKGMVTIATNMAGRGTDILLGGNPEGLAKQWRRANPDAPEEEYEKVLAEYRTLCAREHDEVVALGGLHIIGTERHESRRIDNQLRGRSGRQGDPGSSRFYLSLEDDLLRIFGSERVSKIMDFLKIEEGEAITHGMITKAIENAQKKVEAHNFEIRKHLIEYDDVMNKQREVIYTQRREILAGQDIRRHFTQMMDDTIEEISSFAIEKVSAHEWDWQSIGEGILKTYGFQIDIPPQTMDRLSPESFRTLLKEKVHEAFDAKVAAFGDELMDHLIKVIMLQTIDAQWKDHLLSIDHLKEGIGLRGYGQKDPKQEYKKEAYQLFMDMMARIAAETVEKIFWVQIAHEEDVERMEEEQQKQARKKMVFNLVDEDETSEPSKSKKLAGRNEPCPCGSGKKYKKCCGK.

ATP is bound by residues Gln-87, 105-109, and Asp-512; that span reads GEGKT. The tract at residues 846–897 is disordered; it reads EEEQQKQARKKMVFNLVDEDETSEPSKSKKLAGRNEPCPCGSGKKYKKCCGK. Positions 883, 885, 894, and 895 each coordinate Zn(2+).

This sequence belongs to the SecA family. In terms of assembly, monomer and homodimer. Part of the essential Sec protein translocation apparatus which comprises SecA, SecYEG and auxiliary proteins SecDF-YajC and YidC. It depends on Zn(2+) as a cofactor.

The protein localises to the cell inner membrane. It localises to the cytoplasm. It catalyses the reaction ATP + H2O + cellular proteinSide 1 = ADP + phosphate + cellular proteinSide 2.. Its function is as follows. Part of the Sec protein translocase complex. Interacts with the SecYEG preprotein conducting channel. Has a central role in coupling the hydrolysis of ATP to the transfer of proteins into and across the cell membrane, serving as an ATP-driven molecular motor driving the stepwise translocation of polypeptide chains across the membrane. The chain is Protein translocase subunit SecA from Geobacter sulfurreducens (strain ATCC 51573 / DSM 12127 / PCA).